The primary structure comprises 462 residues: Proteases secretion protein PrtF (462 aa).

Positions 1 to 23 are cleaved as a signal peptide; sequence MRRKAVLLTVVLSLSGGSAQAMG.

The protein belongs to the outer membrane factor (OMF) (TC 1.B.17) family.

The protein resides in the cell outer membrane. Functionally, involved in the secretion of proteases A, B, C and G. The chain is Proteases secretion protein PrtF (prtF) from Dickeya chrysanthemi (Pectobacterium chrysanthemi).